The sequence spans 359 residues: Membrane-bound lytic murein transglycosylase C (359 aa).

The N-terminal stretch at 1–16 (MKKYLALALIAPLLIS) is a signal peptide. A lipid anchor (N-palmitoyl cysteine) is attached at Cys17. Cys17 carries the S-diacylglycerol cysteine lipid modification.

Belongs to the transglycosylase Slt family.

The protein resides in the cell outer membrane. The catalysed reaction is Exolytic cleavage of the (1-&gt;4)-beta-glycosidic linkage between N-acetylmuramic acid (MurNAc) and N-acetylglucosamine (GlcNAc) residues in peptidoglycan, from either the reducing or the non-reducing ends of the peptidoglycan chains, with concomitant formation of a 1,6-anhydrobond in the MurNAc residue.. Murein-degrading enzyme. May play a role in recycling of muropeptides during cell elongation and/or cell division. In Escherichia coli O81 (strain ED1a), this protein is Membrane-bound lytic murein transglycosylase C.